The primary structure comprises 652 residues: ATP-dependent RNA helicase DDX51 (652 aa).

Positions 1–145 (MALFTINRYL…KAEKAEELTS (145 aa)) are disordered. The segment covering 25-34 (KALLAKLQKQ) has biased composition (low complexity). 2 stretches are compositionally biased toward basic and acidic residues: residues 66–77 (LQETKGKIKKSE) and 107–122 (VIVK…EKSV). Positions 212 to 220 (FFPVQAEVI) match the Q motif motif. One can recognise a Helicase ATP-binding domain in the interval 234 to 442 (GPGGYRPRDV…LLDLHQPRLF (209 aa)). 247 to 254 (APTGSGKT) contributes to the ATP binding site. The DEAD box signature appears at 362–365 (DEAD). A Helicase C-terminal domain is found at 480–626 (IILHFLLRLK…KQHVHPEALK (147 aa)).

The protein belongs to the DEAD box helicase family. DDX51/DBP6 subfamily.

It is found in the nucleus. Its subcellular location is the nucleolus. The catalysed reaction is ATP + H2O = ADP + phosphate + H(+). Its function is as follows. ATP-binding RNA helicase involved in the biogenesis of 60S ribosomal subunits. This Danio rerio (Zebrafish) protein is ATP-dependent RNA helicase DDX51 (ddx51).